Here is a 33-residue protein sequence, read N- to C-terminus: Photosystem II reaction center protein Psb30 (33 aa).

The chain crosses the membrane as a helical span at residues 5–25 (LIVQLTSLILISIAGPIIIAL).

Belongs to the Psb30/Ycf12 family. As to quaternary structure, PSII is composed of 1 copy each of membrane proteins PsbA, PsbB, PsbC, PsbD, PsbE, PsbF, PsbH, PsbI, PsbJ, PsbK, PsbL, PsbM, PsbT, PsbY, PsbZ, Psb30/Ycf12, peripheral proteins of the oxygen-evolving complex and a large number of cofactors. It forms dimeric complexes.

The protein localises to the plastid. The protein resides in the chloroplast thylakoid membrane. In terms of biological role, a core subunit of photosystem II (PSII), probably helps stabilize the reaction center. This Euglena myxocylindracea protein is Photosystem II reaction center protein Psb30.